The following is a 228-amino-acid chain: UPF0173 metal-dependent hydrolase Smar_0891 (228 aa).

It belongs to the UPF0173 family.

In Staphylothermus marinus (strain ATCC 43588 / DSM 3639 / JCM 9404 / F1), this protein is UPF0173 metal-dependent hydrolase Smar_0891.